Here is a 255-residue protein sequence, read N- to C-terminus: Thiazole synthase (255 aa).

Lys96 serves as the catalytic Schiff-base intermediate with DXP. 1-deoxy-D-xylulose 5-phosphate contacts are provided by residues Gly157, Ala183–Gly184, and Asn205–Thr206.

This sequence belongs to the ThiG family. Homotetramer. Forms heterodimers with either ThiH or ThiS.

It is found in the cytoplasm. It catalyses the reaction [ThiS sulfur-carrier protein]-C-terminal-Gly-aminoethanethioate + 2-iminoacetate + 1-deoxy-D-xylulose 5-phosphate = [ThiS sulfur-carrier protein]-C-terminal Gly-Gly + 2-[(2R,5Z)-2-carboxy-4-methylthiazol-5(2H)-ylidene]ethyl phosphate + 2 H2O + H(+). The protein operates within cofactor biosynthesis; thiamine diphosphate biosynthesis. In terms of biological role, catalyzes the rearrangement of 1-deoxy-D-xylulose 5-phosphate (DXP) to produce the thiazole phosphate moiety of thiamine. Sulfur is provided by the thiocarboxylate moiety of the carrier protein ThiS. In vitro, sulfur can be provided by H(2)S. The chain is Thiazole synthase from Geobacillus sp. (strain WCH70).